A 195-amino-acid chain; its full sequence is Imidazoleglycerol-phosphate dehydratase (195 aa).

Belongs to the imidazoleglycerol-phosphate dehydratase family.

The protein resides in the cytoplasm. The enzyme catalyses D-erythro-1-(imidazol-4-yl)glycerol 3-phosphate = 3-(imidazol-4-yl)-2-oxopropyl phosphate + H2O. The protein operates within amino-acid biosynthesis; L-histidine biosynthesis; L-histidine from 5-phospho-alpha-D-ribose 1-diphosphate: step 6/9. The chain is Imidazoleglycerol-phosphate dehydratase from Alkaliphilus metalliredigens (strain QYMF).